The sequence spans 477 residues: Sucrose-6-phosphate hydrolase (477 aa).

Substrate is bound by residues W36–D39, Q55, W63, F98–S99, R160–D161, E215, and W298. Residue D39 is part of the active site.

The protein belongs to the glycosyl hydrolase 32 family.

It localises to the cytoplasm. The catalysed reaction is Hydrolysis of terminal non-reducing beta-D-fructofuranoside residues in beta-D-fructofuranosides.. The protein operates within glycan biosynthesis; sucrose metabolism. Its function is as follows. Enables the bacterium to metabolize sucrose as a sole carbon source. This Escherichia coli protein is Sucrose-6-phosphate hydrolase (cscA).